The sequence spans 380 residues: Cytochrome b (380 aa).

4 consecutive transmembrane segments (helical) span residues 34 to 54 (FGSL…LLAA), 78 to 99 (WLIR…YLHI), 114 to 134 (WNTG…GYVL), and 179 to 199 (FFTL…IHLT). Heme b contacts are provided by His-84 and His-98. The heme b site is built by His-183 and His-197. His-202 contributes to the a ubiquinone binding site. 4 helical membrane-spanning segments follow: residues 227–247 (LKDI…ALFS), 289–309 (LGGV…PLLH), 321–341 (FSQL…WVGS), and 348–368 (FIII…ILFP).

Belongs to the cytochrome b family. As to quaternary structure, the cytochrome bc1 complex contains 11 subunits: 3 respiratory subunits (MT-CYB, CYC1 and UQCRFS1), 2 core proteins (UQCRC1 and UQCRC2) and 6 low-molecular weight proteins (UQCRH/QCR6, UQCRB/QCR7, UQCRQ/QCR8, UQCR10/QCR9, UQCR11/QCR10 and a cleavage product of UQCRFS1). This cytochrome bc1 complex then forms a dimer. It depends on heme b as a cofactor.

Its subcellular location is the mitochondrion inner membrane. Functionally, component of the ubiquinol-cytochrome c reductase complex (complex III or cytochrome b-c1 complex) that is part of the mitochondrial respiratory chain. The b-c1 complex mediates electron transfer from ubiquinol to cytochrome c. Contributes to the generation of a proton gradient across the mitochondrial membrane that is then used for ATP synthesis. The protein is Cytochrome b (MT-CYB) of Bugeranus carunculatus (Wattled crane).